Consider the following 122-residue polypeptide: Phosphoribosyl-ATP pyrophosphatase (122 aa).

Belongs to the PRA-PH family.

It localises to the cytoplasm. The catalysed reaction is 1-(5-phospho-beta-D-ribosyl)-ATP + H2O = 1-(5-phospho-beta-D-ribosyl)-5'-AMP + diphosphate + H(+). Its pathway is amino-acid biosynthesis; L-histidine biosynthesis; L-histidine from 5-phospho-alpha-D-ribose 1-diphosphate: step 2/9. The protein is Phosphoribosyl-ATP pyrophosphatase of Cupriavidus metallidurans (strain ATCC 43123 / DSM 2839 / NBRC 102507 / CH34) (Ralstonia metallidurans).